We begin with the raw amino-acid sequence, 124 residues long: Small ribosomal subunit protein uS12cy (124 aa).

Belongs to the universal ribosomal protein uS12 family. As to quaternary structure, part of the 30S ribosomal subunit.

It is found in the plastid. Its subcellular location is the chloroplast. Functionally, with S4 and S5 plays an important role in translational accuracy. Located at the interface of the 30S and 50S subunits. This chain is Small ribosomal subunit protein uS12cy (rps12-B), found in Olimarabidopsis pumila (Dwarf rocket).